The primary structure comprises 204 residues: Protein G1-like5 (204 aa).

Disordered stretches follow at residues 1 to 45 (MEFV…ESQK) and 157 to 204 (RARG…GAAA). The span at 26 to 39 (TGATSASAAGASPS) shows a compositional bias: low complexity. The 128-residue stretch at 40-167 (RYESQKRRDW…ARGVSYEKKK (128 aa)) folds into the ALOG domain. The Nuclear localization signal motif lies at 165-169 (KKKRK).

It belongs to the plant homeotic and developmental regulators ALOG protein family.

The protein localises to the nucleus. Functionally, probable transcription regulator that acts as a developmental regulator by promoting cell growth in response to light. The chain is Protein G1-like5 (G1L5) from Oryza sativa subsp. japonica (Rice).